Consider the following 90-residue polypeptide: Small ribosomal subunit protein bS16 (90 aa).

Belongs to the bacterial ribosomal protein bS16 family.

The chain is Small ribosomal subunit protein bS16 from Geobacillus sp. (strain WCH70).